Reading from the N-terminus, the 242-residue chain is Uridylate kinase (242 aa).

ATP is bound by residues Lys15 to Gly18, Gly58, and Arg62. Residues Asp77 and Thr139–Thr146 each bind UMP. ATP is bound by residues Thr166, Tyr172, and Asp175.

Belongs to the UMP kinase family. As to quaternary structure, homohexamer.

The protein resides in the cytoplasm. The enzyme catalyses UMP + ATP = UDP + ADP. Its pathway is pyrimidine metabolism; CTP biosynthesis via de novo pathway; UDP from UMP (UMPK route): step 1/1. Inhibited by UTP. In terms of biological role, catalyzes the reversible phosphorylation of UMP to UDP. The polypeptide is Uridylate kinase (Buchnera aphidicola subsp. Acyrthosiphon pisum (strain APS) (Acyrthosiphon pisum symbiotic bacterium)).